A 471-amino-acid chain; its full sequence is NADH-quinone oxidoreductase subunit N (471 aa).

14 helical membrane passes run 6 to 26, 30 to 50, 70 to 90, 98 to 118, 123 to 143, 158 to 178, 198 to 218, 230 to 250, 264 to 284, 292 to 312, 320 to 340, 365 to 385, 400 to 420, and 438 to 458; these read FILP…LGVY, SSNI…ILIF, LSSF…SIST, IFLI…MVMI, LMVF…LASF, FVLS…VYGF, LTFG…AVPF, PTAV…TVFI, WQPI…IAAI, LIAY…STGS, IVYM…LLML, LSLL…GFFA, FLAI…LKII, and IWLK…FIFP.

The protein belongs to the complex I subunit 2 family. In terms of assembly, NDH-1 is composed of 14 different subunits. Subunits NuoA, H, J, K, L, M, N constitute the membrane sector of the complex.

The protein localises to the cell inner membrane. It carries out the reaction a quinone + NADH + 5 H(+)(in) = a quinol + NAD(+) + 4 H(+)(out). Its function is as follows. NDH-1 shuttles electrons from NADH, via FMN and iron-sulfur (Fe-S) centers, to quinones in the respiratory chain. The immediate electron acceptor for the enzyme in this species is believed to be ubiquinone. Couples the redox reaction to proton translocation (for every two electrons transferred, four hydrogen ions are translocated across the cytoplasmic membrane), and thus conserves the redox energy in a proton gradient. The polypeptide is NADH-quinone oxidoreductase subunit N (Pelagibacter ubique (strain HTCC1062)).